A 207-amino-acid polypeptide reads, in one-letter code: Dephospho-CoA kinase (207 aa).

Residues 10 to 207 (ILGLTGGIGS…FYLTLRGGQS (198 aa)) form the DPCK domain. Position 18–23 (18–23 (GSGKSA)) interacts with ATP.

Belongs to the CoaE family.

Its subcellular location is the cytoplasm. It carries out the reaction 3'-dephospho-CoA + ATP = ADP + CoA + H(+). It participates in cofactor biosynthesis; coenzyme A biosynthesis; CoA from (R)-pantothenate: step 5/5. In terms of biological role, catalyzes the phosphorylation of the 3'-hydroxyl group of dephosphocoenzyme A to form coenzyme A. This chain is Dephospho-CoA kinase, found in Pseudomonas syringae pv. tomato (strain ATCC BAA-871 / DC3000).